The following is a 427-amino-acid chain: 4-hydroxy-3-methylbut-2-en-1-yl diphosphate synthase (flavodoxin) (427 aa).

Cys-300, Cys-303, Cys-346, and Glu-353 together coordinate [4Fe-4S] cluster.

The protein belongs to the IspG family. [4Fe-4S] cluster serves as cofactor.

The catalysed reaction is (2E)-4-hydroxy-3-methylbut-2-enyl diphosphate + oxidized [flavodoxin] + H2O + 2 H(+) = 2-C-methyl-D-erythritol 2,4-cyclic diphosphate + reduced [flavodoxin]. The protein operates within isoprenoid biosynthesis; isopentenyl diphosphate biosynthesis via DXP pathway; isopentenyl diphosphate from 1-deoxy-D-xylulose 5-phosphate: step 5/6. Converts 2C-methyl-D-erythritol 2,4-cyclodiphosphate (ME-2,4cPP) into 1-hydroxy-2-methyl-2-(E)-butenyl 4-diphosphate. The polypeptide is 4-hydroxy-3-methylbut-2-en-1-yl diphosphate synthase (flavodoxin) (Chromobacterium violaceum (strain ATCC 12472 / DSM 30191 / JCM 1249 / CCUG 213 / NBRC 12614 / NCIMB 9131 / NCTC 9757 / MK)).